The chain runs to 1561 residues: Sterile alpha motif domain-containing protein 9-like (1561 aa).

Residues 14–79 (WTKEHVRKWV…RMYNKLISSP (66 aa)) form the SAM domain. The tract at residues 78-157 (SPESHNQDSR…DNKPKPEQMS (80 aa)) is disordered. Basic and acidic residues-rich tracts occupy residues 82–107 (HNQD…KNEE) and 142–153 (VTKDMEDNKPKP).

In terms of assembly, interacts with EEA1.

The protein resides in the early endosome. It is found in the mitochondrion. Its function is as follows. May be involved in endosome fusion. Mediates down-regulation of growth factor signaling via internalization of growth factor receptors. This Mus musculus (Mouse) protein is Sterile alpha motif domain-containing protein 9-like (Samd9l).